A 180-amino-acid polypeptide reads, in one-letter code: Protein Flattop (180 aa).

A disordered region spans residues 111-180 (PQISGKASGK…AGDKVLQAQS (70 aa)).

Belongs to the Flattop family.

It is found in the cytoplasm. The protein localises to the cytoskeleton. It localises to the cilium basal body. The protein resides in the cell projection. Its subcellular location is the cilium. It is found in the apical cell membrane. The protein localises to the cilium axoneme. In terms of biological role, microtubule inner protein (MIP) part of the dynein-decorated doublet microtubules (DMTs) in cilia axoneme. Acts as a regulator of cilium basal body docking and positioning in mono- and multiciliated cells. Regulates basal body docking and cilia formation in multiciliated lung cells. Regulates kinocilium positioning and stereocilia bundle morphogenesis in the inner ear. This is Protein Flattop from Xenopus laevis (African clawed frog).